We begin with the raw amino-acid sequence, 176 residues long: Translation initiation factor IF-3 (176 aa).

This sequence belongs to the IF-3 family. As to quaternary structure, monomer.

The protein localises to the cytoplasm. IF-3 binds to the 30S ribosomal subunit and shifts the equilibrium between 70S ribosomes and their 50S and 30S subunits in favor of the free subunits, thus enhancing the availability of 30S subunits on which protein synthesis initiation begins. The chain is Translation initiation factor IF-3 from Streptococcus thermophilus (strain ATCC BAA-491 / LMD-9).